A 194-amino-acid polypeptide reads, in one-letter code: Peptidyl-tRNA hydrolase (194 aa).

Tyrosine 17 provides a ligand contact to tRNA. Histidine 22 serves as the catalytic Proton acceptor. TRNA is bound by residues phenylalanine 68, asparagine 70, and asparagine 116.

The protein belongs to the PTH family. Monomer.

The protein localises to the cytoplasm. It carries out the reaction an N-acyl-L-alpha-aminoacyl-tRNA + H2O = an N-acyl-L-amino acid + a tRNA + H(+). Hydrolyzes ribosome-free peptidyl-tRNAs (with 1 or more amino acids incorporated), which drop off the ribosome during protein synthesis, or as a result of ribosome stalling. Functionally, catalyzes the release of premature peptidyl moieties from peptidyl-tRNA molecules trapped in stalled 50S ribosomal subunits, and thus maintains levels of free tRNAs and 50S ribosomes. The chain is Peptidyl-tRNA hydrolase from Actinobacillus pleuropneumoniae serotype 5b (strain L20).